Reading from the N-terminus, the 261-residue chain is Acyl-[acyl-carrier-protein]--UDP-N-acetylglucosamine O-acyltransferase (261 aa).

The protein belongs to the transferase hexapeptide repeat family. LpxA subfamily. As to quaternary structure, homotrimer.

Its subcellular location is the cytoplasm. It catalyses the reaction a (3R)-hydroxyacyl-[ACP] + UDP-N-acetyl-alpha-D-glucosamine = a UDP-3-O-[(3R)-3-hydroxyacyl]-N-acetyl-alpha-D-glucosamine + holo-[ACP]. The protein operates within glycolipid biosynthesis; lipid IV(A) biosynthesis; lipid IV(A) from (3R)-3-hydroxytetradecanoyl-[acyl-carrier-protein] and UDP-N-acetyl-alpha-D-glucosamine: step 1/6. Involved in the biosynthesis of lipid A, a phosphorylated glycolipid that anchors the lipopolysaccharide to the outer membrane of the cell. In Paracoccus denitrificans (strain Pd 1222), this protein is Acyl-[acyl-carrier-protein]--UDP-N-acetylglucosamine O-acyltransferase.